An 824-amino-acid polypeptide reads, in one-letter code: Intraflagellar transport protein 88 homolog (824 aa).

The segment at 113–134 is disordered; that stretch reads FDPLSQSRGPASPLEAKKKDSP. TPR repeat units follow at residues 197–230, 233–266, 272–305, 307–338, 415–448, 450–483, 484–517, 518–551, 552–585, 586–619, 620–653, and 654–687; these read YSVL…KMFS, GILK…VPSV, IKIM…APNL, AGYN…PLEI, NDLE…DSRV, SAAA…DRYN, PAAL…DSSC, TEAL…LRNS, AEVL…IPTD, PQVL…FPCN, IEVI…QPTQ, and VKWQ…FPEN. Residues 724 to 824 form a disordered region; the sequence is EQRIKSGRDG…EELGDDLLPE (101 aa). The span at 748–757 shows a compositional bias: polar residues; it reads DSGQNYSASS. Residues 797–808 show a composition bias toward basic and acidic residues; it reads ERPKTAAKKRID. Over residues 809–824 the composition is skewed to acidic residues; that stretch reads EDDFADEELGDDLLPE.

As to quaternary structure, component of the IFT complex B, at least composed of IFT20, IFT22, IFT25, IFT27, IFT46, IFT52, TRAF3IP1/IFT54, IFT57, IFT74, IFT80, IFT81, and IFT88. Interacts with IFT20, IFT22, IFT25, IFT27, IFT52, TRAF3IP1, IFT74, IFT80 and IFT81. Interacts with IFT172. Interacts with IFT57. Interacts with IFT46. Interacts with IFT70B. Interacts with C2CD3. Interacts with ENTR1 (via N-terminus). Interacts with LRRC56. Interacts with DZIP1. Interacts with CCDC38. Interacts with CCDC146. Interacts with CFAP53. As to expression, expressed in the heart, brain, liver, lung, kidney, skeletal muscle and pancreas.

The protein resides in the cytoplasm. The protein localises to the cytoskeleton. Its subcellular location is the microtubule organizing center. It is found in the centrosome. It localises to the centriole. The protein resides in the cell projection. The protein localises to the cilium. Its subcellular location is the cilium basal body. It is found in the flagellum. Positively regulates primary cilium biogenesis. Also involved in autophagy since it is required for trafficking of ATG16L and the expansion of the autophagic compartment. In Homo sapiens (Human), this protein is Intraflagellar transport protein 88 homolog (IFT88).